A 663-amino-acid polypeptide reads, in one-letter code: UvrABC system protein B (663 aa).

The Helicase ATP-binding domain occupies 26–414; the sequence is DGLESGLAKQ…DNVAEQVVRP (389 aa). ATP is bound at residue 39-46; it reads GVTGSGKT. The short motif at 92–115 is the Beta-hairpin element; it reads YYDYYQPEAYVPASDTFIEKDASI. Residues 430 to 596 enclose the Helicase C-terminal domain; sequence QVDDLMSEIR…GINKSVEDIL (167 aa). The 36-residue stretch at 624–659 folds into the UVR domain; sequence AKEINALEKQMYAHAQNMEFELAAKIRDEYLLLKEQ.

It belongs to the UvrB family. As to quaternary structure, forms a heterotetramer with UvrA during the search for lesions. Interacts with UvrC in an incision complex.

The protein resides in the cytoplasm. Its function is as follows. The UvrABC repair system catalyzes the recognition and processing of DNA lesions. A damage recognition complex composed of 2 UvrA and 2 UvrB subunits scans DNA for abnormalities. Upon binding of the UvrA(2)B(2) complex to a putative damaged site, the DNA wraps around one UvrB monomer. DNA wrap is dependent on ATP binding by UvrB and probably causes local melting of the DNA helix, facilitating insertion of UvrB beta-hairpin between the DNA strands. Then UvrB probes one DNA strand for the presence of a lesion. If a lesion is found the UvrA subunits dissociate and the UvrB-DNA preincision complex is formed. This complex is subsequently bound by UvrC and the second UvrB is released. If no lesion is found, the DNA wraps around the other UvrB subunit that will check the other stand for damage. This Legionella pneumophila (strain Paris) protein is UvrABC system protein B.